A 762-amino-acid chain; its full sequence is Mediator of RNA polymerase II transcription subunit 15 (762 aa).

Disordered stretches follow at residues 70-102 (AQQA…INAL), 311-330 (GVGH…GMGP), and 406-494 (GSGG…LNPQ). Over residues 76 to 94 (DGGGNSSQQGGGGGGGGSG) the composition is skewed to gly residues. Over residues 465–481 (QRSTIGQSPGGSLNTPG) the composition is skewed to polar residues.

Belongs to the Mediator complex subunit 15 family. In terms of assembly, component of the Mediator complex.

Its subcellular location is the nucleus. Component of the Mediator complex, a coactivator involved in the regulated transcription of nearly all RNA polymerase II-dependent genes. Mediator functions as a bridge to convey information from gene-specific regulatory proteins to the basal RNA polymerase II transcription machinery. Mediator is recruited to promoters by direct interactions with regulatory proteins and serves as a scaffold for the assembly of a functional preinitiation complex with RNA polymerase II and the general transcription factors. This chain is Mediator of RNA polymerase II transcription subunit 15 (MED15), found in Anopheles gambiae (African malaria mosquito).